The chain runs to 336 residues: Di/tripeptide transport system permease protein DppB (336 aa).

6 consecutive transmembrane segments (helical) span residues 10–30 (GLLIPTFFGVTLLTFALIRLI), 102–122 (LSLAAMLFAGTFGLLAGVIAA), 145–165 (IFWWGLILIMLFSVSLGWTPV), 198–218 (AVRHLILPAIVLGTIPLAVIA), 257–277 (LIPVLTVFGLQVGTLLAGAVL), and 307–327 (ILLVATLVILVNFVVDILYGL). In terms of domain architecture, ABC transmembrane type-1 spans 96–325 (FPATLELSLA…LVNFVVDILY (230 aa)).

Belongs to the binding-protein-dependent transport system permease family. OppBC subfamily. As to quaternary structure, the complex is composed of two ATP-binding proteins (DppD and DppF), two transmembrane proteins (DppB and DppC) and a solute-binding protein (DppA1-A5). Five orthologous SBPs (DppA1-A5) are present in P.aeruginosa, which increases the substrate specificity of the DppBCDF transporter.

It is found in the cell inner membrane. In terms of biological role, part of the ABC transporter DppABCDF involved in the uptake of various di/tripeptides. Is also involved in the uptake of phaseolotoxin, a toxic tripeptide inhibiting the enzyme ornithine carbamoyltransferase. Responsible for the translocation of the substrate across the membrane. This Pseudomonas aeruginosa (strain UCBPP-PA14) protein is Di/tripeptide transport system permease protein DppB.